Reading from the N-terminus, the 142-residue chain is Large ribosomal subunit protein uL11 (142 aa).

It belongs to the universal ribosomal protein uL11 family. As to quaternary structure, part of the ribosomal stalk of the 50S ribosomal subunit. Interacts with L10 and the large rRNA to form the base of the stalk. L10 forms an elongated spine to which L12 dimers bind in a sequential fashion forming a multimeric L10(L12)X complex. Post-translationally, one or more lysine residues are methylated.

In terms of biological role, forms part of the ribosomal stalk which helps the ribosome interact with GTP-bound translation factors. This is Large ribosomal subunit protein uL11 from Colwellia psychrerythraea (strain 34H / ATCC BAA-681) (Vibrio psychroerythus).